The following is a 276-amino-acid chain: Type II pantothenate kinase (276 aa).

8-15 (DAGGTLTK) contacts ATP. The Proton acceptor role is filled by Glu-76. Residues Thr-105, 127-131 (GGTIM), Phe-143, and Ser-230 contribute to the ATP site.

It belongs to the type II pantothenate kinase family. Homodimer.

It is found in the cytoplasm. The enzyme catalyses (R)-pantothenate + ATP = (R)-4'-phosphopantothenate + ADP + H(+). Its pathway is cofactor biosynthesis; coenzyme A biosynthesis; CoA from (R)-pantothenate: step 1/5. Its function is as follows. Catalyzes the phosphorylation of pantothenate (Pan), the first step in CoA biosynthesis. The protein is Type II pantothenate kinase of Bacillus anthracis.